A 262-amino-acid chain; its full sequence is Phosphonates import ATP-binding protein PhnC 3 (262 aa).

The 243-residue stretch at 3 to 245 folds into the ABC transporter domain; the sequence is IQLECLSVTY…ELNRIYGNAE (243 aa). 36–43 is an ATP binding site; the sequence is GASGSGKS.

It belongs to the ABC transporter superfamily. Phosphonates importer (TC 3.A.1.9.1) family. In terms of assembly, the complex is composed of two ATP-binding proteins (PhnC), two transmembrane proteins (PhnE) and a solute-binding protein (PhnD).

Its subcellular location is the cell inner membrane. The catalysed reaction is phosphonate(out) + ATP + H2O = phosphonate(in) + ADP + phosphate + H(+). Part of the ABC transporter complex PhnCDE involved in phosphonates import. Responsible for energy coupling to the transport system. This Nostoc sp. (strain PCC 7120 / SAG 25.82 / UTEX 2576) protein is Phosphonates import ATP-binding protein PhnC 3.